A 694-amino-acid polypeptide reads, in one-letter code: Elongation factor G (694 aa).

A tr-type G domain is found at 6-288 (KLYRNIGIAA…GVIEYLPSPT (283 aa)). GTP is bound by residues 15–22 (AHVDAGKT), 86–90 (DTPGH), and 140–143 (NKMD).

The protein belongs to the TRAFAC class translation factor GTPase superfamily. Classic translation factor GTPase family. EF-G/EF-2 subfamily.

It is found in the cytoplasm. Its function is as follows. Catalyzes the GTP-dependent ribosomal translocation step during translation elongation. During this step, the ribosome changes from the pre-translocational (PRE) to the post-translocational (POST) state as the newly formed A-site-bound peptidyl-tRNA and P-site-bound deacylated tRNA move to the P and E sites, respectively. Catalyzes the coordinated movement of the two tRNA molecules, the mRNA and conformational changes in the ribosome. The polypeptide is Elongation factor G (Legionella pneumophila (strain Paris)).